A 55-amino-acid polypeptide reads, in one-letter code: Ferredoxin (55 aa).

4Fe-4S ferredoxin-type domains lie at 2 to 27 (FVIN…TQGD) and 28 to 55 (TQFV…PNQE). [4Fe-4S] cluster-binding residues include Cys-8, Cys-11, Cys-14, Cys-18, Cys-37, Cys-40, Cys-43, and Cys-47.

Requires [4Fe-4S] cluster as cofactor.

Functionally, ferredoxins are iron-sulfur proteins that transfer electrons in a wide variety of metabolic reactions. The chain is Ferredoxin from Clostridium butyricum.